Reading from the N-terminus, the 112-residue chain is Large ribosomal subunit protein eL30 (112 aa).

Belongs to the eukaryotic ribosomal protein eL30 family. As to expression, expressed in roots and leaves.

This is Large ribosomal subunit protein eL30 from Triticum aestivum (Wheat).